Consider the following 273-residue polypeptide: Pantothenate synthetase (273 aa).

27-34 (MGALHQGH) lines the ATP pocket. The active-site Proton donor is the H34. Q58 is a binding site for (R)-pantoate. A beta-alanine-binding site is contributed by Q58. ATP is bound at residue 144–147 (GKKD). Q150 contributes to the (R)-pantoate binding site. ATP contacts are provided by residues V173 and 181-184 (LSSR).

It belongs to the pantothenate synthetase family. Homodimer.

The protein localises to the cytoplasm. The catalysed reaction is (R)-pantoate + beta-alanine + ATP = (R)-pantothenate + AMP + diphosphate + H(+). It participates in cofactor biosynthesis; (R)-pantothenate biosynthesis; (R)-pantothenate from (R)-pantoate and beta-alanine: step 1/1. Functionally, catalyzes the condensation of pantoate with beta-alanine in an ATP-dependent reaction via a pantoyl-adenylate intermediate. The chain is Pantothenate synthetase from Nitratiruptor sp. (strain SB155-2).